The sequence spans 637 residues: ATP-dependent zinc metalloprotease FtsH (637 aa).

The Cytoplasmic portion of the chain corresponds to 1–7 (MNRVFRN). The chain crosses the membrane as a helical span at residues 8-28 (TIFYLLILLVVIGVVSYFQTS). Residues 29–109 (NPKTENMSYS…VEPAQETSGW (81 aa)) lie on the Extracellular side of the membrane. A helical membrane pass occupies residues 110–130 (VTFLTTIIPFVIIFILFFFLL). Over 131-637 (NQAQGGGSRV…TEEKKDDTKE (507 aa)) the chain is Cytoplasmic. 201 to 208 (GPPGTGKT) is an ATP binding site. Residue His423 coordinates Zn(2+). Glu424 is a catalytic residue. The Zn(2+) site is built by His427 and Asp499. The tract at residues 514–637 (FGMSEKLGPL…TEEKKDDTKE (124 aa)) is not necessary for FtsH function.

In the central section; belongs to the AAA ATPase family. The protein in the C-terminal section; belongs to the peptidase M41 family. In terms of assembly, homohexamer. Interacts with FloT at midcell. Interacts with FloA at midcell. Another study shows only minor colocalization with FloA or FloT. Requires Zn(2+) as cofactor.

It is found in the cell membrane. Its subcellular location is the membrane raft. Acts as a processive, ATP-dependent zinc metallopeptidase for both cytoplasmic and membrane proteins. Plays a role in the quality control of integral membrane proteins. Its function is as follows. In vitro partially degrades Spo0E, the phosphatase that acts on Spo0A-P. Recognition requires the last 14 residues of Spo0E. Its stabile accumulation requires FlotA and Flot. May degrade EzrA. The protein is ATP-dependent zinc metalloprotease FtsH of Bacillus subtilis (strain 168).